We begin with the raw amino-acid sequence, 306 residues long: N-acetylmuramic acid/N-acetylglucosamine kinase (306 aa).

Position 12 (S12) interacts with ATP. Substrate is bound at residue N35. T124 lines the ATP pocket. Residues 142–144 (GWG) and D149 contribute to the substrate site. A208 provides a ligand contact to ATP.

The protein belongs to the eukaryotic-type N-acetylglucosamine kinase family. The cofactor is Mg(2+).

It localises to the cytoplasm. The enzyme catalyses N-acetyl-D-glucosamine + ATP = N-acetyl-D-glucosamine 6-phosphate + ADP + H(+). It carries out the reaction N-acetyl-D-muramate + ATP = N-acetyl-D-muramate 6-phosphate + ADP + H(+). The protein operates within cell wall biogenesis; peptidoglycan recycling. In terms of biological role, catalyzes the ATP-dependent phosphorylation of both cell wall (peptidoglycan) amino sugars, N-acetylmuramic acid (MurNAc) and N-acetylglucosamine (GlcNAc), at the 6-hydroxyl group. Neither the non-N-acetylated forms of the cell wall sugars, i.e., glucosamine and/or muramic acid, nor epimeric hexoses or 1,6-anhydro-MurNAc are substrates for the enzyme. May have a role in the rescue of the murein sugars GlcNAc and MurNAc released from muropeptides during cell wall turnover in C.acetobutylicum. The protein is N-acetylmuramic acid/N-acetylglucosamine kinase of Clostridium acetobutylicum (strain ATCC 824 / DSM 792 / JCM 1419 / IAM 19013 / LMG 5710 / NBRC 13948 / NRRL B-527 / VKM B-1787 / 2291 / W).